The primary structure comprises 701 residues: Potassium-transporting ATPase ATP-binding subunit (701 aa).

Positions 1–28 are disordered; it reads MNPDAPTPKNKSSRSRPSDRPQARKKAK. 4 helical membrane passes run 57 to 77, 90 to 110, 245 to 265, and 276 to 296; these read MFLVWVGTIITLSVTIEPNLF, GILTGILFFTVWFANFAEAVA, VLLAVLSLVFLFVVATLPVFA, and ILVALLVALIPTTIGGLLSAI. The active-site 4-aspartylphosphate intermediate is the Asp329. Residues Asp366, Glu370, 397-404, and Lys416 each bind ATP; that span reads FSAKTRMS. Mg(2+) contacts are provided by Asp539 and Asp543. Transmembrane regions (helical) follow at residues 599 to 619, 635 to 655, and 681 to 701; these read FSLANDIAKYFAIIPVIFASA, AVLSALIYNALIIPALIPLAL, and VIAPFIAIKLIDVLITLVGLA.

This sequence belongs to the cation transport ATPase (P-type) (TC 3.A.3) family. Type IA subfamily. As to quaternary structure, the system is composed of three essential subunits: KdpA, KdpB and KdpC.

It is found in the cell membrane. The enzyme catalyses K(+)(out) + ATP + H2O = K(+)(in) + ADP + phosphate + H(+). Part of the high-affinity ATP-driven potassium transport (or Kdp) system, which catalyzes the hydrolysis of ATP coupled with the electrogenic transport of potassium into the cytoplasm. This subunit is responsible for energy coupling to the transport system and for the release of the potassium ions to the cytoplasm. This chain is Potassium-transporting ATPase ATP-binding subunit, found in Anabaena sp. (strain L31).